A 449-amino-acid polypeptide reads, in one-letter code: MTSSVWQERRHGEDKQRRNDHRSPYQRDRARILHSAAFRRLQAKTQVLGVGMNDFYRTRLTHSLEVSQIGTGIAAQLRRKYPQHKQLLCSMSLLESLCLAHDIGHPPFGHGGEVALNYMMRDHGGFEGNGQTFRILSKLEPYTLDFGMNLCRRTMLGILKYPAPHSKLFVAGEHNEITNHRQLKPSQWPPVKGIFDDDNDIFAWVLEPLSEADRSRFTSPQQGSHPALHHYPHLRTQFKSFDCSIMELADDIAYAVHDLEDAIVMGIVTASQWHQDVAPTLTNSGDTWIRQELADIGNKLFSHEHHLRKDAIGTLVNGFVTAIVISEDDVFEEPLLRFNATLEPEFAIALNVLKQLVYKYVIRKPEIQMLEYKGQQIVMGLFEAFASDPERLLPLNTQERWRESEQQGLNSHRVLADYISGMTDEFAGRLYQQLFSPKAGSNVELSKEM.

Residues 1-27 (MTSSVWQERRHGEDKQRRNDHRSPYQR) form a disordered region. A compositionally biased stretch (basic and acidic residues) spans 7–27 (QERRHGEDKQRRNDHRSPYQR). One can recognise an HD domain in the interval 59–255 (RLTHSLEVSQ…MELADDIAYA (197 aa)).

It belongs to the dGTPase family. Type 2 subfamily.

The polypeptide is Deoxyguanosinetriphosphate triphosphohydrolase-like protein (Shewanella baltica (strain OS195)).